We begin with the raw amino-acid sequence, 277 residues long: Putative phosphoenolpyruvate synthase regulatory protein (277 aa).

157 to 164 contacts ADP; it reads GVSRCGKT.

This sequence belongs to the pyruvate, phosphate/water dikinase regulatory protein family. PSRP subfamily.

It carries out the reaction [pyruvate, water dikinase] + ADP = [pyruvate, water dikinase]-phosphate + AMP + H(+). It catalyses the reaction [pyruvate, water dikinase]-phosphate + phosphate + H(+) = [pyruvate, water dikinase] + diphosphate. Its function is as follows. Bifunctional serine/threonine kinase and phosphorylase involved in the regulation of the phosphoenolpyruvate synthase (PEPS) by catalyzing its phosphorylation/dephosphorylation. This Cronobacter sakazakii (strain ATCC BAA-894) (Enterobacter sakazakii) protein is Putative phosphoenolpyruvate synthase regulatory protein.